The sequence spans 355 residues: Protein RecA (355 aa).

Position 74–81 (74–81) interacts with ATP; sequence GPESSGKT.

This sequence belongs to the RecA family.

The protein localises to the cytoplasm. Its function is as follows. Can catalyze the hydrolysis of ATP in the presence of single-stranded DNA, the ATP-dependent uptake of single-stranded DNA by duplex DNA, and the ATP-dependent hybridization of homologous single-stranded DNAs. It interacts with LexA causing its activation and leading to its autocatalytic cleavage. This is Protein RecA from Cytophaga hutchinsonii (strain ATCC 33406 / DSM 1761 / CIP 103989 / NBRC 15051 / NCIMB 9469 / D465).